The primary structure comprises 199 residues: ATP-dependent Clp protease proteolytic subunit (199 aa).

Catalysis depends on serine 98, which acts as the Nucleophile. Residue histidine 123 is part of the active site.

It belongs to the peptidase S14 family. Fourteen ClpP subunits assemble into 2 heptameric rings which stack back to back to give a disk-like structure with a central cavity, resembling the structure of eukaryotic proteasomes.

It is found in the cytoplasm. It carries out the reaction Hydrolysis of proteins to small peptides in the presence of ATP and magnesium. alpha-casein is the usual test substrate. In the absence of ATP, only oligopeptides shorter than five residues are hydrolyzed (such as succinyl-Leu-Tyr-|-NHMec, and Leu-Tyr-Leu-|-Tyr-Trp, in which cleavage of the -Tyr-|-Leu- and -Tyr-|-Trp bonds also occurs).. Its function is as follows. Cleaves peptides in various proteins in a process that requires ATP hydrolysis. Has a chymotrypsin-like activity. Plays a major role in the degradation of misfolded proteins. The chain is ATP-dependent Clp protease proteolytic subunit from Clostridium botulinum (strain Eklund 17B / Type B).